A 160-amino-acid chain; its full sequence is uncharacterized protein (160 aa).

This is an uncharacterized protein from Human cytomegalovirus (strain AD169) (HHV-5).